Consider the following 408-residue polypeptide: Peptidase T (408 aa).

His-78 is a binding site for Zn(2+). Asp-80 is a catalytic residue. Asp-140 contacts Zn(2+). Glu-173 (proton acceptor) is an active-site residue. Glu-174, Asp-196, and His-379 together coordinate Zn(2+).

Belongs to the peptidase M20B family. Requires Zn(2+) as cofactor.

The protein resides in the cytoplasm. The enzyme catalyses Release of the N-terminal residue from a tripeptide.. Functionally, cleaves the N-terminal amino acid of tripeptides. This Citrobacter koseri (strain ATCC BAA-895 / CDC 4225-83 / SGSC4696) protein is Peptidase T.